The chain runs to 210 residues: Tetraspanin-31 (210 aa).

Residues 1–12 (MVCGGFACSKNA) lie on the Cytoplasmic side of the membrane. A helical membrane pass occupies residues 13-33 (LCALNVVYMLVGLLLIGVAAW). Over 34–44 (AKGLGLVSSIH) the chain is Extracellular. The chain crosses the membrane as a helical span at residues 45–65 (IIGGVIAVGVFLLLIAVAGLV). At 66-72 (GAVNHHQ) the chain is on the cytoplasmic side. The chain crosses the membrane as a helical span at residues 73 to 93 (VLLFFYMIILGLVFIFQFGIS). The Extracellular portion of the chain corresponds to 94–173 (CSCLAINLSK…FLKHSDEALK (80 aa)). Residues N100, N109, N117, and N134 are each glycosylated (N-linked (GlcNAc...) asparagine). Residues 174–194 (ILGGVGLFFSFTEILGVWLAM) form a helical membrane-spanning segment. At 195 to 210 (RFRNQKDPRANPSAFL) the chain is on the cytoplasmic side.

This sequence belongs to the tetraspanin (TM4SF) family.

Its subcellular location is the membrane. This is Tetraspanin-31 (TSPAN31) from Bos taurus (Bovine).